The primary structure comprises 289 residues: ATP synthase gamma chain (289 aa).

Belongs to the ATPase gamma chain family. In terms of assembly, F-type ATPases have 2 components, CF(1) - the catalytic core - and CF(0) - the membrane proton channel. CF(1) has five subunits: alpha(3), beta(3), gamma(1), delta(1), epsilon(1). CF(0) has three main subunits: a, b and c.

Its subcellular location is the cell inner membrane. In terms of biological role, produces ATP from ADP in the presence of a proton gradient across the membrane. The gamma chain is believed to be important in regulating ATPase activity and the flow of protons through the CF(0) complex. The polypeptide is ATP synthase gamma chain (Coxiella burnetii (strain Dugway 5J108-111)).